The following is a 180-amino-acid chain: Glycoprotein Xg (180 aa).

The signal sequence occupies residues 1 to 21; it reads MESWWGLPCLAFLCFLMHARG. Topologically, residues 22–142 are extracellular; that stretch reads QRDFDLADAL…GNPEGNMVAK (121 aa). Residues 28-133 are disordered; sequence ADALDDPEPT…HGGDHHSTYG (106 aa). Residues 47–57 show a composition bias toward pro residues; the sequence is KPKPPYYPQPE. The helical transmembrane segment at 143 to 163 threads the bilayer; the sequence is IVSPIVSVVVVTLLGAAASYF. Topologically, residues 164-180 are cytoplasmic; sequence KLNNRRNCFRTHEPENV.

The protein belongs to the CD99 family. Post-translationally, O-glycosylated. Expressed in erythroid tissues, including thymus, bone marrow and fetal liver, and in several nonerythroid tissues, such as heart, placenta, skeletal muscle, thyroid and trachea, as well as in skin fibroblasts. Expression is low or undetectable in other tissues.

The protein resides in the cell membrane. This Homo sapiens (Human) protein is Glycoprotein Xg (XG).